The primary structure comprises 458 residues: Ammonium transporter Rh type B (458 aa).

Residues 1–13 lie on the Cytoplasmic side of the membrane; that stretch reads MAGSPSRAAGRRL. A helical transmembrane segment spans residues 14-34; the sequence is QLPLLCLFLQGATAVLFAVFV. Residues 35–61 are Extracellular-facing; that stretch reads RYNHKTDAALWHRGNYSNADNEFYFRY. Asn-49 carries an N-linked (GlcNAc...) asparagine glycan. Residues 62 to 82 form a helical membrane-spanning segment; it reads PSFQDVHAMVFVGFGFLMVFL. The Cytoplasmic segment spans residues 83–86; sequence QRYG. Residues 87 to 107 traverse the membrane as a helical segment; sequence FSSVGFTFLLAAFALQWSTLV. At 108–124 the chain is on the extracellular side; sequence QGFLHSFHSGHIHVGVE. A helical membrane pass occupies residues 125 to 145; it reads SMINADFCAGAVLISFGAVLG. Residues 146–149 are Cytoplasmic-facing; sequence KTGP. The chain crosses the membrane as a helical span at residues 150–170; it reads AQLLLMALLEVVLFGINEFVL. Over 171–178 the chain is Extracellular; the sequence is LHLLGVRD. The helical transmembrane segment at 179–201 threads the bilayer; sequence AGGSMTIHTFGAYFGLVLSRVLY. Residues 202–219 lie on the Cytoplasmic side of the membrane; it reads RPQLEKSKHRQGSVYHSD. Residues 220–240 traverse the membrane as a helical segment; it reads LFAMIGTIFLWIFWPSFNSAL. Over 241–251 the chain is Extracellular; it reads TALGAGQHRTA. The chain crosses the membrane as a helical span at residues 252–272; it reads LNTYYSLAASTLGTFALSALV. Over 273–282 the chain is Cytoplasmic; sequence GEDGRLDMVH. Residues 283–303 traverse the membrane as a helical segment; that stretch reads IQNAALAGGVVVGTSSEMMLT. Pro-304 is a topological domain (extracellular). A helical transmembrane segment spans residues 305-325; the sequence is FGALAAGFLAGTVSTLGYKFF. The Cytoplasmic portion of the chain corresponds to 326–346; sequence TPILESKFKVQDTCGVHNLHG. The helical transmembrane segment at 347 to 367 threads the bilayer; the sequence is MPGVLGALLGVLVAGLATHEA. Over 368–393 the chain is Extracellular; it reads YGDGLESVFPLIAEGQRSATSQAMLQ. The helical transmembrane segment at 394–414 threads the bilayer; that stretch reads LFGLFVTLMFASVGGGLGGLL. Topologically, residues 415–458 are cytoplasmic; the sequence is LKLPFLDSPPDSQCYEDQVHWQVPGEHEDEAQRPLRVEEADTQA. Residues 416 to 424 form an interaction with ANK3 region; sequence KLPFLDSPP. The short motif at 429–432 is the Basolateral sorting signal element; it reads YEDQ. The tract at residues 439–458 is disordered; the sequence is GEHEDEAQRPLRVEEADTQA. Positions 444–458 are enriched in basic and acidic residues; it reads EAQRPLRVEEADTQA.

It belongs to the ammonium transporter (TC 2.A.49) family. Rh subfamily. Interacts (via C-terminus) with ANK2 and ANK3; required for targeting to the basolateral membrane. In terms of processing, N-glycosylated.

It localises to the cell membrane. Its subcellular location is the basolateral cell membrane. The catalysed reaction is NH4(+)(in) = NH4(+)(out). The enzyme catalyses methylamine(out) = methylamine(in). It catalyses the reaction CO2(out) = CO2(in). In terms of biological role, ammonium transporter involved in the maintenance of acid-base homeostasis. Transports ammonium and its related derivative methylammonium across the basolateral plasma membrane of epithelial cells likely contributing to renal transepithelial ammonia transport and ammonia metabolism. May transport either NH4(+) or NH3 ammonia species predominantly mediating an electrogenic NH4(+) transport. May act as a CO2 channel providing for renal acid secretion. The protein is Ammonium transporter Rh type B (RHBG) of Papio hamadryas (Hamadryas baboon).